A 198-amino-acid chain; its full sequence is MYAGIVQELIDELGRLPGIGPKSAQRIAFHILQTEAFDVTRLAEVLLEVRDKVRFCEICGNVSEQATCSICRDPRRDPALICVVEEAKDVVAIERTREFRGLYHVLGGAISPIDGVGPDDLRIRQLVQRLADGTVQEVIIATDPNLEGEATATYLSRLLTTLEVRVTRLASGLPVGGDLEYADEVTLGRAFEGRRQVS.

The C4-type zinc finger occupies 56–71 (CEICGNVSEQATCSIC). Residues 79–174 (ALICVVEEAK…RVTRLASGLP (96 aa)) form the Toprim domain.

The protein belongs to the RecR family.

Functionally, may play a role in DNA repair. It seems to be involved in an RecBC-independent recombinational process of DNA repair. It may act with RecF and RecO. This chain is Recombination protein RecR, found in Leifsonia xyli subsp. xyli (strain CTCB07).